The sequence spans 115 residues: Nucleoid-associated protein P9211_00201 (115 aa).

This sequence belongs to the YbaB/EbfC family. As to quaternary structure, homodimer.

It is found in the cytoplasm. It localises to the nucleoid. Its function is as follows. Binds to DNA and alters its conformation. May be involved in regulation of gene expression, nucleoid organization and DNA protection. This is Nucleoid-associated protein P9211_00201 from Prochlorococcus marinus (strain MIT 9211).